Here is a 246-residue protein sequence, read N- to C-terminus: 5-oxoprolinase subunit A (246 aa).

It belongs to the LamB/PxpA family. Forms a complex composed of PxpA, PxpB and PxpC.

It carries out the reaction 5-oxo-L-proline + ATP + 2 H2O = L-glutamate + ADP + phosphate + H(+). Functionally, catalyzes the cleavage of 5-oxoproline to form L-glutamate coupled to the hydrolysis of ATP to ADP and inorganic phosphate. This is 5-oxoprolinase subunit A from Vibrio cholerae serotype O1 (strain M66-2).